Consider the following 901-residue polypeptide: HTH-type transcriptional regulator MalT (901 aa).

39 to 46 (SPAGYGKT) is a binding site for ATP. The HTH luxR-type domain maps to 829–894 (ELIRTSPLTQ…AAVQHAQKLL (66 aa)). A DNA-binding region (H-T-H motif) is located at residues 853–872 (NEQIAGELEVAATTIKTHIR).

Belongs to the MalT family. Monomer in solution. Oligomerizes to an active state in the presence of the positive effectors ATP and maltotriose.

Its activity is regulated as follows. Activated by ATP and maltotriose, which are both required for DNA binding. Functionally, positively regulates the transcription of the maltose regulon whose gene products are responsible for uptake and catabolism of malto-oligosaccharides. Specifically binds to the promoter region of its target genes, recognizing a short DNA motif called the MalT box. This is HTH-type transcriptional regulator MalT from Escherichia coli (strain 55989 / EAEC).